Here is a 268-residue protein sequence, read N- to C-terminus: Putative hydro-lyase Arad_8587 (268 aa).

The protein belongs to the D-glutamate cyclase family.

The polypeptide is Putative hydro-lyase Arad_8587 (Rhizobium rhizogenes (strain K84 / ATCC BAA-868) (Agrobacterium radiobacter)).